A 295-amino-acid chain; its full sequence is Methionine aminopeptidase (295 aa).

Histidine 62 serves as a coordination point for substrate. Positions 82, 93, and 153 each coordinate a divalent metal cation. Histidine 161 is a binding site for substrate. Glutamate 187 and glutamate 280 together coordinate a divalent metal cation.

It belongs to the peptidase M24A family. Methionine aminopeptidase archaeal type 2 subfamily. Monomer. The cofactor is Co(2+). Zn(2+) is required as a cofactor. It depends on Mn(2+) as a cofactor. Fe(2+) serves as cofactor.

The catalysed reaction is Release of N-terminal amino acids, preferentially methionine, from peptides and arylamides.. Its function is as follows. Removes the N-terminal methionine from nascent proteins. The N-terminal methionine is often cleaved when the second residue in the primary sequence is small and uncharged (Met-Ala-, Cys, Gly, Pro, Ser, Thr, or Val). This chain is Methionine aminopeptidase, found in Pyrococcus horikoshii (strain ATCC 700860 / DSM 12428 / JCM 9974 / NBRC 100139 / OT-3).